A 94-amino-acid chain; its full sequence is Small ribosomal subunit protein uS19 (94 aa).

Positions 73 to 94 are disordered; that stretch reads EFSPTRRFGGHADKKSKKGQVK.

It belongs to the universal ribosomal protein uS19 family.

Functionally, protein S19 forms a complex with S13 that binds strongly to the 16S ribosomal RNA. The sequence is that of Small ribosomal subunit protein uS19 from Kosmotoga olearia (strain ATCC BAA-1733 / DSM 21960 / TBF 19.5.1).